The primary structure comprises 419 residues: Phosphatidylcholine:ceramide cholinephosphotransferase 1 (419 aa).

The 64-residue stretch at 13 to 76 (WSPKKVADWL…LDMIETLKME (64 aa)) folds into the SAM domain. Ser-14 carries the phosphoserine modification. 5 consecutive transmembrane segments (helical) span residues 142–162 (FLAF…ISVV), 190–210 (FSIC…QWLL), 221–241 (FFCI…VTTL), 282–302 (MCGD…YLFI), and 310–330 (LWWY…CILL). Residue His-291 is part of the active site. The Cytoplasmic portion of the chain corresponds to 331–419 (AHDHYTVDVV…VKYSRLVNDT (89 aa)). Residues His-334 and Asp-338 contribute to the active site.

The protein belongs to the sphingomyelin synthase family. In terms of tissue distribution, isoform 1 is widely expressed, isoform 2 shows a more narrow distribution and isoform 3 is detected only in testis and heart.

It localises to the golgi apparatus membrane. It carries out the reaction an N-acylsphing-4-enine + a 1,2-diacyl-sn-glycero-3-phosphocholine = a sphingomyelin + a 1,2-diacyl-sn-glycerol. The catalysed reaction is 1-(9Z-octadecenoyl)-2-acyl-sn-3-glycerol + a sphingomyelin = a 1-(9Z-octadecenoyl)-2-acyl-sn-glycero-3-phosphocholine + an N-acylsphing-4-enine. It catalyses the reaction N-hexadecanoylsphinganine + a 1,2-diacyl-sn-glycero-3-phosphocholine = N-hexadecanoyl-sphinganine-1-phosphocholine + a 1,2-diacyl-sn-glycerol. The enzyme catalyses N-hexadecanoyl-(4R)-hydroxysphinganine + a 1,2-diacyl-sn-glycero-3-phosphocholine = N-hexadecanoyl-(4R)-hydroxysphinganine-phosphocholine + a 1,2-diacyl-sn-glycerol. It carries out the reaction an N-acylsphing-4-enine + a 1,2-diacyl-sn-glycero-3-phosphoethanolamine = an N-acylsphing-4-enine 1-phosphoethanolamine + a 1,2-diacyl-sn-glycerol. It functions in the pathway sphingolipid metabolism. Functionally, major sphingomyelin synthase at the Golgi apparatus. Catalyzes the reversible transfer of phosphocholine moiety in sphingomyelin biosynthesis: in the forward reaction transfers phosphocholine head group of phosphatidylcholine (PC) on to ceramide (CER) to form ceramide phosphocholine (sphingomyelin, SM) and diacylglycerol (DAG) as by-product, and in the reverse reaction transfers phosphocholine from SM to DAG to form PC and CER. The direction of the reaction depends on the levels of CER and DAG in Golgi membranes. Converts the newly synthesized CER, that is transported from the endoplasmic reticulum to the trans-Golgi by the Cer transport protein (CERT), to SM. Can form a heteromeric complex with glucosylceramide synthase (GCS) increasing SMS activity and reducing glucosylceramide synthesis, a critical mechanism that controls the metabolic fate of CER in the Golgi. Does not use free phosphorylcholine or CDP-choline as donor. Can also transfer phosphoethanolamine head group of phosphatidylethanolamine (PE) on to CER to form ceramide phosphoethanolamine (CPE). Regulates receptor-mediated signal transduction via mitogenic DAG and proapoptotic CER, as well as via SM, a structural component of membrane rafts that serve as platforms for signal transduction and protein sorting. Plays a role in secretory transport via regulation of DAG pool at the Golgi apparatus and its downstream effects on PRKD1. Its function is as follows. (Microbial infection) Contributes to the brain SM production for Japanese encephalitis virus attachment and infection. This Mus musculus (Mouse) protein is Phosphatidylcholine:ceramide cholinephosphotransferase 1 (Sgms1).